A 46-amino-acid chain; its full sequence is GAVPCGKDGRQCRNHADCCNCCPIGTCAPSTNWILPGCSTGQFMTR.

Disulfide bonds link cysteine 5/cysteine 19, cysteine 12/cysteine 22, cysteine 18/cysteine 27, and cysteine 21/cysteine 38. The residue at position 44 (methionine 44) is a D-methionine. A propeptide (removed by a carboxypeptidase) is located at residue arginine 46.

It belongs to the conotoxin I1 superfamily. Expressed by the venom duct.

The protein resides in the secreted. Its function is as follows. Iota-conotoxins bind to voltage-gated sodium channels (Nav) and act as agonists by shifting the voltage-dependence of activation to more hyperpolarized levels. Produces general excitatory symptoms. The chain is Iota-conotoxin-like M11.1 from Conus magus (Magical cone).